A 116-amino-acid polypeptide reads, in one-letter code: Proline-rich protein 9 (116 aa).

This is Proline-rich protein 9 (Prr9) from Mus musculus (Mouse).